The following is a 308-amino-acid chain: Aspartate carbamoyltransferase catalytic subunit (308 aa).

2 residues coordinate carbamoyl phosphate: Arg-55 and Thr-56. Lys-83 provides a ligand contact to L-aspartate. Residues Arg-105, His-133, and Gln-136 each coordinate carbamoyl phosphate. L-aspartate-binding residues include Arg-166 and Arg-223. Carbamoyl phosphate is bound by residues Gly-264 and Pro-265.

It belongs to the aspartate/ornithine carbamoyltransferase superfamily. ATCase family. Heterododecamer (2C3:3R2) of six catalytic PyrB chains organized as two trimers (C3), and six regulatory PyrI chains organized as three dimers (R2).

The catalysed reaction is carbamoyl phosphate + L-aspartate = N-carbamoyl-L-aspartate + phosphate + H(+). Its pathway is pyrimidine metabolism; UMP biosynthesis via de novo pathway; (S)-dihydroorotate from bicarbonate: step 2/3. Catalyzes the condensation of carbamoyl phosphate and aspartate to form carbamoyl aspartate and inorganic phosphate, the committed step in the de novo pyrimidine nucleotide biosynthesis pathway. This is Aspartate carbamoyltransferase catalytic subunit from Salinispora tropica (strain ATCC BAA-916 / DSM 44818 / JCM 13857 / NBRC 105044 / CNB-440).